A 313-amino-acid polypeptide reads, in one-letter code: Cytochrome f (313 aa).

An N-terminal signal peptide occupies residues 1 to 30 (MRNWSFSKAALTVSLLALSWSPFGPAEVQA). Heme contacts are provided by Y31, C51, C54, and H55. Residues 279 to 298 (VQGLIIFFAFVLIAQVFLVL) form a helical membrane-spanning segment.

The protein belongs to the cytochrome f family. As to quaternary structure, the 4 large subunits of the cytochrome b6-f complex are cytochrome b6, subunit IV (17 kDa polypeptide, petD), cytochrome f and the Rieske protein, while the 4 small subunits are PetG, PetL, PetM and PetN. The complex functions as a dimer. Requires heme as cofactor.

Its subcellular location is the plastid. The protein resides in the chloroplast thylakoid membrane. Component of the cytochrome b6-f complex, which mediates electron transfer between photosystem II (PSII) and photosystem I (PSI), cyclic electron flow around PSI, and state transitions. The protein is Cytochrome f of Nephroselmis olivacea (Green alga).